Consider the following 190-residue polypeptide: Dynein axonemal light chain 1 (190 aa).

LRR repeat units follow at residues 49–70 (VCEK…NGLK), 71–92 (NLKI…EAVG), 94–115 (SLEE…HVLK), and 116–137 (KLKV…NKLQ). Positions 150–190 (NPLEEKHSAEGDWQDRVTKSLKALKKLDGTPIIKNDEEEED) constitute an LRRCT domain.

Belongs to the dynein light chain LC1-type family. In terms of assembly, interacts with DNAH5, a outer arm dynein heavy chain. Interacts with tubulin located within the A-tubule of the outer doublets in a ATP-independent manner.

Its subcellular location is the cytoplasm. It is found in the cytoskeleton. The protein localises to the cilium axoneme. Part of the multisubunit axonemal ATPase complexes that generate the force for cilia motility and govern beat frequency. Component of the outer arm dynein (ODA). May be involved in a mechanosensory feedback mechanism controlling ODA activity based on external conformational cues by tethering the outer arm dynein heavy chain (DNAH5) to the microtubule within the axoneme. The chain is Dynein axonemal light chain 1 (DNAL1) from Ciona intestinalis (Transparent sea squirt).